The chain runs to 289 residues: Ribosomal RNA small subunit methyltransferase A (289 aa).

Residues Asn33, Val35, Gly60, Glu81, Asp111, and Asn130 each coordinate S-adenosyl-L-methionine.

Belongs to the class I-like SAM-binding methyltransferase superfamily. rRNA adenine N(6)-methyltransferase family. RsmA subfamily.

Its subcellular location is the cytoplasm. It catalyses the reaction adenosine(1518)/adenosine(1519) in 16S rRNA + 4 S-adenosyl-L-methionine = N(6)-dimethyladenosine(1518)/N(6)-dimethyladenosine(1519) in 16S rRNA + 4 S-adenosyl-L-homocysteine + 4 H(+). Functionally, specifically dimethylates two adjacent adenosines (A1518 and A1519) in the loop of a conserved hairpin near the 3'-end of 16S rRNA in the 30S particle. May play a critical role in biogenesis of 30S subunits. This Corynebacterium efficiens (strain DSM 44549 / YS-314 / AJ 12310 / JCM 11189 / NBRC 100395) protein is Ribosomal RNA small subunit methyltransferase A.